The primary structure comprises 172 residues: Translationally-controlled tumor protein (172 aa).

Positions 1–172 (MIIYRDLISH…FKDGLEMEKC (172 aa)) constitute a TCTP domain. Phosphoserine; by PLK1 is present on S46. S53 carries the phosphoserine modification. Phosphoserine; by PLK1 is present on S64. The interval 70–172 (VDIVMNHHLQ…FKDGLEMEKC (103 aa)) is required for reduction of TSC22D1 protein stability.

The protein belongs to the TCTP family. Homodimer. Interacts with STEAP3. Interacts with TSC22D1; interaction results in the destabilization of TSC22D1 protein.

The protein localises to the cytoplasm. Involved in calcium binding and microtubule stabilization. Acts as a negative regulator of TSC22D1-mediated apoptosis, via interaction with and destabilization of TSC22D1 protein. The polypeptide is Translationally-controlled tumor protein (TPT1) (Oryctolagus cuniculus (Rabbit)).